Consider the following 647-residue polypeptide: C2H2 finger domain transcription factor USV101 (647 aa).

Residues 1–10 (MSFVAPDDRA) show a composition bias toward basic and acidic residues. A disordered region spans residues 1–132 (MSFVAPDDRA…ATGYTPDGQP (132 aa)). Polar residues-rich tracts occupy residues 27–54 (ESTS…SPNQ) and 66–84 (SSHS…STAY). Positions 97–122 (PTQQQQQQQSEQHIPSPPSSSNRPPS) are enriched in low complexity. 2 consecutive C2H2-type zinc fingers follow at residues 144 to 169 (FRCR…VRKH) and 175 to 197 (FPCH…ATVH). The segment at 220 to 647 (QRASREQRRR…VKQQDDKKTQ (428 aa)) is disordered. The segment covering 222–248 (ASREQRRRGEVVEVPKGAVERRRETRK) has biased composition (basic and acidic residues). The span at 249–259 (AQAAAAQAAAA) shows a compositional bias: low complexity. Residues 261–278 (GHSQQNSPYAQYHESQWN) show a composition bias toward polar residues. Low complexity-rich tracts occupy residues 312 to 327 (SSSA…YDSA), 404 to 414 (HGAYPPHDAAA), and 421 to 434 (GYYH…GSYP). Residues 504–515 (RAEDDFGKDDRK) show a composition bias toward basic and acidic residues. Positions 521 to 540 (SPSNSQVPDSSTAAHANGAH) are enriched in low complexity. A compositionally biased stretch (basic and acidic residues) spans 628–647 (VDKEREKKEEVKQQDDKKTQ).

It is found in the nucleus. It localises to the cytoplasm. Its function is as follows. Transcription factor that promotes pheromone gene expression, which results in a subsequent increase in cell fusion. Also promotes production of melanin and capsule and thereby is required for full virulence. The sequence is that of C2H2 finger domain transcription factor USV101 from Cryptococcus neoformans var. grubii serotype A (strain H99 / ATCC 208821 / CBS 10515 / FGSC 9487) (Filobasidiella neoformans var. grubii).